The sequence spans 102 residues: Large ribosomal subunit protein uL24 (102 aa).

Belongs to the universal ribosomal protein uL24 family. Part of the 50S ribosomal subunit.

One of two assembly initiator proteins, it binds directly to the 5'-end of the 23S rRNA, where it nucleates assembly of the 50S subunit. Its function is as follows. One of the proteins that surrounds the polypeptide exit tunnel on the outside of the subunit. The polypeptide is Large ribosomal subunit protein uL24 (Paraburkholderia phytofirmans (strain DSM 17436 / LMG 22146 / PsJN) (Burkholderia phytofirmans)).